Consider the following 300-residue polypeptide: MVLENGFPPYPDFLKIFNSHEDSQLLVIPRSYNRYYPNPLPQTAVLKNPEGRFWNVQWTKSQEVIISLQEGWVKFVKDNGLIDRDFLLFTYDGSRSFWVRIHRNGLPLEPTAPIKIQEISDDEDETNGDGDPHMEEEGDTDENMIVSLSLGSSDEVGDDDDDDYDTAICDEVNKASGSSKKGRVTRKHRDDSLASITPQIFLADPNNPFFISTSSCSRRILVIARQVIKDYGLNFDGTVNLIDGFGELTRKVGKWKDRVVIYKWNEMFTRNKVKQGDVIICEIIREEDVVRSIKVHFVKN.

A DNA-binding region (TF-B3) is located at residues 11-105 (PDFLKIFNSH…SFWVRIHRNG (95 aa)). The interval 115–142 (KIQEISDDEDETNGDGDPHMEEEGDTDE) is disordered. Residues 119–129 (ISDDEDETNGD) are compositionally biased toward acidic residues.

The protein resides in the nucleus. In Arabidopsis thaliana (Mouse-ear cress), this protein is B3 domain-containing protein At5g57720.